The following is a 567-amino-acid chain: Restriction of telomere capping protein 5 (567 aa).

The TLDc domain occupies 289-515; sequence KVMTPALLAQ…IQDVEVWGCG (227 aa).

This sequence belongs to the RTC5 family.

The protein resides in the cytoplasm. In terms of biological role, may be involved in a process influencing telomere capping. In Saccharomyces cerevisiae (strain RM11-1a) (Baker's yeast), this protein is Restriction of telomere capping protein 5 (RTC5).